We begin with the raw amino-acid sequence, 393 residues long: Formate-dependent phosphoribosylglycinamide formyltransferase (393 aa).

Residues 22–23 and Glu82 each bind N(1)-(5-phospho-beta-D-ribosyl)glycinamide; that span reads EL. ATP contacts are provided by residues Arg114, Lys155, 160-165, 195-198, and Glu203; these read SSGKGQ and EGFI. Residues 119–308 enclose the ATP-grasp domain; that stretch reads RLAAEELGLP…EFALHARAIL (190 aa). Residues Glu267 and Glu279 each contribute to the Mg(2+) site. N(1)-(5-phospho-beta-D-ribosyl)glycinamide is bound by residues Asp286, Lys356, and 363–364; that span reads RR.

Belongs to the PurK/PurT family. Homodimer.

It carries out the reaction N(1)-(5-phospho-beta-D-ribosyl)glycinamide + formate + ATP = N(2)-formyl-N(1)-(5-phospho-beta-D-ribosyl)glycinamide + ADP + phosphate + H(+). It functions in the pathway purine metabolism; IMP biosynthesis via de novo pathway; N(2)-formyl-N(1)-(5-phospho-D-ribosyl)glycinamide from N(1)-(5-phospho-D-ribosyl)glycinamide (formate route): step 1/1. Involved in the de novo purine biosynthesis. Catalyzes the transfer of formate to 5-phospho-ribosyl-glycinamide (GAR), producing 5-phospho-ribosyl-N-formylglycinamide (FGAR). Formate is provided by PurU via hydrolysis of 10-formyl-tetrahydrofolate. The chain is Formate-dependent phosphoribosylglycinamide formyltransferase from Azotobacter vinelandii (strain DJ / ATCC BAA-1303).